A 430-amino-acid chain; its full sequence is MKIGIKVLGCPKNEADCDVLEAILKDRGHEIVSDIEEAEAVIIDTCGFIESAKKESIDEIITFANYKKYRPFFLCVKGCLVQRYSKELSKEIPEVDSWLGVLSPHQIAEAIEKATPYLVEKPTVVYEEAPRSCNNSFAYVKIADGCDRSCTFCSIPLFKGRFKSRSIESIYSEVERLVEIGVKEIILVAQDTTAYGVDLYNKAVLDQLLKKLNSIEGNFRIRVMYLHPDHLTDKMIDAICSLDKLLPYFDIPVQHGSDRILKQMGRIKNSEQLLELIAYIRSHNPDAAIRTSVMVGFPGETNDDFQKLLDFLEKAKFDRLGCFIYSDEEGTVSSSMKRKVSERIARERYENLLIFQSQIAYERLKRFVGKNLNVLIEQENELFYVARSHLDAPEVDGEVTVKKTREVDIPGYYTVRITDSDEYDLKGELI.

In terms of domain architecture, MTTase N-terminal spans 1-116 (MKIGIKVLGC…IAEAIEKATP (116 aa)). 6 residues coordinate [4Fe-4S] cluster: C10, C46, C79, C146, C150, and C153. The Radical SAM core domain occupies 132–362 (SCNNSFAYVK…LIFQSQIAYE (231 aa)). In terms of domain architecture, TRAM spans 365–430 (KRFVGKNLNV…DEYDLKGELI (66 aa)).

The protein belongs to the methylthiotransferase family. RimO subfamily. [4Fe-4S] cluster is required as a cofactor.

It localises to the cytoplasm. It carries out the reaction L-aspartate(89)-[ribosomal protein uS12]-hydrogen + (sulfur carrier)-SH + AH2 + 2 S-adenosyl-L-methionine = 3-methylsulfanyl-L-aspartate(89)-[ribosomal protein uS12]-hydrogen + (sulfur carrier)-H + 5'-deoxyadenosine + L-methionine + A + S-adenosyl-L-homocysteine + 2 H(+). Its function is as follows. Catalyzes the methylthiolation of an aspartic acid residue of ribosomal protein uS12. This is Ribosomal protein uS12 methylthiotransferase RimO from Pseudothermotoga lettingae (strain ATCC BAA-301 / DSM 14385 / NBRC 107922 / TMO) (Thermotoga lettingae).